Consider the following 340-residue polypeptide: NAD-dependent epimerase/dehydratase terH (340 aa).

Residues 7 to 27 (IVPPGGLVLVTGVTGFIGSYI) form a helical membrane-spanning segment. N-linked (GlcNAc...) asparagine glycosylation occurs at Asn139. Residue Tyr176 participates in NADP(+) binding.

Belongs to the NAD(P)-dependent epimerase/dehydratase family. Dihydroflavonol-4-reductase subfamily.

It localises to the membrane. Functionally, NAD-dependent epimerase/dehydratase; part of the gene cluster that mediates the biosynthesis of terrein, a fungal metabolite with ecological, antimicrobial, antiproliferative, and antioxidative activities. The first step in the pathway is performed by the polyketide synthase terA that produces 4-hydroxy-6-methylpyranon (4-HMP), orsellinic acid (OA), and 2,3-dehydro-6-hydroxymellein (2,3-dehydro-6-HM) by condensing acetyl-CoA with two, three, or four malonyl-CoA units, respectively. 4-HMP and OA are not pathway intermediates, but are rather shunt or side products. 2,3-dehydro-6-HM is further converted to 6-hydroxymellein (6-HM) by the 6-hydroxymellein synthase terB. The monooxygenases terC and terD, the multicopper oxidase terE and the Kelch-like protein terF are then involved in the transformation of 6-HM to terrein. Even if they are co-regulated with the other terrein cluster genes, terH and terI seem to be dispensable for terrein production; whereas one or both of the 2 transporters terG and terJ are probably required for efficient secretion of metabolites. This is NAD-dependent epimerase/dehydratase terH from Aspergillus terreus (strain NIH 2624 / FGSC A1156).